The chain runs to 263 residues: HTH-type transcriptional repressor NanR (263 aa).

A disordered region spans residues 1–21 (MGLMNAFDSQTEDSSPVIGRN). Positions 30 to 98 (KKLSEMVEEE…NGERARVSRP (69 aa)) constitute an HTH gntR-type domain. Positions 58 to 77 (ERELMAFFNVGRPSVREALA) form a DNA-binding region, H-T-H motif.

The protein belongs to the NanR family.

Transcriptional repressor that controls expression of the genes required for the catabolism of sialic acids. This is HTH-type transcriptional repressor NanR from Escherichia coli O7:K1 (strain IAI39 / ExPEC).